We begin with the raw amino-acid sequence, 349 residues long: Ornithine carbamoyltransferase, mitochondrial (349 aa).

Carbamoyl phosphate is bound by residues 73 to 76 (STRT), arginine 124, histidine 151, and glutamine 154. Residues asparagine 195, aspartate 261, serine 265, and methionine 266 each coordinate L-ornithine. Catalysis depends on cysteine 303, which acts as the Proton acceptor. Carbamoyl phosphate is bound by residues 303-304 (CL) and arginine 330.

This sequence belongs to the aspartate/ornithine carbamoyltransferase superfamily. OTCase family. Homotrimer.

The protein resides in the mitochondrion matrix. It catalyses the reaction carbamoyl phosphate + L-ornithine = L-citrulline + phosphate + H(+). It functions in the pathway amino-acid biosynthesis; L-arginine biosynthesis; L-arginine from L-ornithine and carbamoyl phosphate: step 1/3. The polypeptide is Ornithine carbamoyltransferase, mitochondrial (Coccidioides immitis (strain RS) (Valley fever fungus)).